The following is a 632-amino-acid chain: MEETQDSSSSKPKNTDENFSLWIEQYFNHKCCITFLTGCYSCQWQYREWEKTELGSCCCSRKEQFFYMCLVIAFILSVLFLFVWVETSNEYNGFDWVVYLGTGCWFFWSILVLSAAGIMVAYTTLLLLLGFLLLWERIELNLHTSHKVFICLVIVLCSFLLAVLSHFWKDKWLIAGLSLQIFAPFVHLSLITVMIIISWPLSICVARLESEVKVRRYRMADYEQEIQERCNVFQRLRALQIAAGLSFLIILLCLYLMPLGIYSPCILKKENLGPKPTLFGHRGAPMLAPENTMMSFEKAVELDVSGLETDIYLSFDSVPFLMHDYDLTRTTNIKEVLPSAAGNHTSNFNWTFLSTLNAGKWFLKHKPFFGMKPLSEADKRRAGNQSIPQLSELLALAKREQKIVIFDLFGPRPGHPLRNTFVRRVVKVILDSKIEQRLIFWLPGFDRDYVRFMAPGFQHVGRLWSIKDLTKHNITIINVDYKRLFYAGLRDYKEAKIYIHVYVINEPWLFSLAWCSSINSVTTDNIELLNQLSRPLFFMTPGFYMFMWLFLDIASAVIIGFVFCYNWIKEIKRERWLEAAASSGLLHSETITDITENNDASQQKPEVAPTSANLAPENMIELQKTEPKTENL.

The Cytoplasmic portion of the chain corresponds to 1 to 64; the sequence is MEETQDSSSS…GSCCCSRKEQ (64 aa). The chain crosses the membrane as a helical span at residues 65-85; sequence FFYMCLVIAFILSVLFLFVWV. Residues 86-114 lie on the Extracellular side of the membrane; the sequence is ETSNEYNGFDWVVYLGTGCWFFWSILVLS. A helical membrane pass occupies residues 115–135; it reads AAGIMVAYTTLLLLLGFLLLW. The Cytoplasmic portion of the chain corresponds to 136–147; that stretch reads ERIELNLHTSHK. A helical membrane pass occupies residues 148-168; it reads VFICLVIVLCSFLLAVLSHFW. The Extracellular portion of the chain corresponds to 169-180; it reads KDKWLIAGLSLQ. A helical membrane pass occupies residues 181 to 201; that stretch reads IFAPFVHLSLITVMIIISWPL. Residues 202–240 lie on the Cytoplasmic side of the membrane; the sequence is SICVARLESEVKVRRYRMADYEQEIQERCNVFQRLRALQ. A helical membrane pass occupies residues 241–261; it reads IAAGLSFLIILLCLYLMPLGI. Topologically, residues 262-542 are extracellular; that stretch reads YSPCILKKEN…SRPLFFMTPG (281 aa). One can recognise a GP-PDE domain in the interval 276 to 533; sequence PTLFGHRGAP…DNIELLNQLS (258 aa). Positions 308, 310, and 323 each coordinate a divalent metal cation. 4 N-linked (GlcNAc...) asparagine glycosylation sites follow: N343, N349, N384, and N473. Residues 543-563 form a helical membrane-spanning segment; it reads FYMFMWLFLDIASAVIIGFVF. Residues 564 to 632 are Cytoplasmic-facing; the sequence is CYNWIKEIKR…QKTEPKTENL (69 aa). Residues 596–632 are disordered; sequence ENNDASQQKPEVAPTSANLAPENMIELQKTEPKTENL. The span at 623–632 shows a compositional bias: basic and acidic residues; it reads QKTEPKTENL.

It belongs to the glycerophosphoryl diester phosphodiesterase family. As to expression, detected in testis, in particular in spermatocytes.

Its subcellular location is the cytoplasm. It localises to the membrane. This is Glycerophosphodiester phosphodiesterase domain-containing protein 4 (Gdpd4) from Mus musculus (Mouse).